The chain runs to 292 residues: 4-diphosphocytidyl-2-C-methyl-D-erythritol kinase (292 aa).

K20 is an active-site residue. 103-113 (PMGGGIGGGSS) contributes to the ATP binding site. The active site involves D145.

It belongs to the GHMP kinase family. IspE subfamily.

It catalyses the reaction 4-CDP-2-C-methyl-D-erythritol + ATP = 4-CDP-2-C-methyl-D-erythritol 2-phosphate + ADP + H(+). It functions in the pathway isoprenoid biosynthesis; isopentenyl diphosphate biosynthesis via DXP pathway; isopentenyl diphosphate from 1-deoxy-D-xylulose 5-phosphate: step 3/6. Catalyzes the phosphorylation of the position 2 hydroxy group of 4-diphosphocytidyl-2C-methyl-D-erythritol. The protein is 4-diphosphocytidyl-2-C-methyl-D-erythritol kinase of Cupriavidus metallidurans (strain ATCC 43123 / DSM 2839 / NBRC 102507 / CH34) (Ralstonia metallidurans).